The primary structure comprises 389 residues: S-adenosylmethionine synthase (389 aa).

H17 provides a ligand contact to ATP. D19 is a Mg(2+) binding site. E45 is a K(+) binding site. Residues E58 and Q101 each contribute to the L-methionine site. The segment at 101 to 111 (QSPDISQGVTE) is flexible loop. ATP contacts are provided by residues 168-170 (DSK), 234-235 (RF), D243, 249-250 (RK), A266, and K270. D243 contacts L-methionine. Position 274 (K274) interacts with L-methionine.

The protein belongs to the AdoMet synthase family. In terms of assembly, homotetramer; dimer of dimers. Mg(2+) serves as cofactor. It depends on K(+) as a cofactor.

The protein localises to the cytoplasm. It catalyses the reaction L-methionine + ATP + H2O = S-adenosyl-L-methionine + phosphate + diphosphate. The protein operates within amino-acid biosynthesis; S-adenosyl-L-methionine biosynthesis; S-adenosyl-L-methionine from L-methionine: step 1/1. Catalyzes the formation of S-adenosylmethionine (AdoMet) from methionine and ATP. The overall synthetic reaction is composed of two sequential steps, AdoMet formation and the subsequent tripolyphosphate hydrolysis which occurs prior to release of AdoMet from the enzyme. This is S-adenosylmethionine synthase from Geobacter sulfurreducens (strain ATCC 51573 / DSM 12127 / PCA).